The sequence spans 1177 residues: Tyrosine-protein kinase hopscotch (1177 aa).

The interval Met1–Ile41 is disordered. The segment covering Ser16–Ile41 has biased composition (polar residues). Residues Ser40 and Ser321 each carry the phosphoserine modification. In terms of domain architecture, FERM spans Gly46–Met414. The SH2; atypical domain maps to His433 to Lys539. 2 consecutive Protein kinase domains span residues Tyr582–Leu843 and Tyr892–Asp1164. ATP contacts are provided by residues Ile898–Val906 and Lys926. Asp1014 serves as the catalytic Proton acceptor. A phosphotyrosine; by autocatalysis mark is found at Tyr1047 and Tyr1048. Residues Lys1158–Glu1177 form a disordered region.

This sequence belongs to the protein kinase superfamily. Tyr protein kinase family. JAK subfamily. Forms a complex with Hsp83 and piwi; probably Hop mediates the interaction between piwi and Hsp83.

It localises to the endomembrane system. It catalyses the reaction L-tyrosyl-[protein] + ATP = O-phospho-L-tyrosyl-[protein] + ADP + H(+). Tyrosine kinase of the non-receptor type, phosphorylates the marelle protein. Required maternally for the establishment of the normal array of embryonic segments: involved in the control of pair-rule gene transcription in a stripe-specific manner. Together with Hsp83 and piwi, mediates canalization, also known as developmental robustness, likely via epigenetic silencing of existing genetic variants and suppression of transposon-induced new genetic variation. The sequence is that of Tyrosine-protein kinase hopscotch (hop) from Drosophila melanogaster (Fruit fly).